Reading from the N-terminus, the 341-residue chain is L-threonine 3-dehydrogenase (341 aa).

C38 lines the Zn(2+) pocket. Residues T40 and H43 each act as charge relay system in the active site. Zn(2+) contacts are provided by H63, E64, C93, C96, C99, and C107. NAD(+) is bound by residues I175, D195, R200, L262 to I264, and I286 to Y287.

This sequence belongs to the zinc-containing alcohol dehydrogenase family. In terms of assembly, homotetramer. Zn(2+) serves as cofactor.

It localises to the cytoplasm. The enzyme catalyses L-threonine + NAD(+) = (2S)-2-amino-3-oxobutanoate + NADH + H(+). Its pathway is amino-acid degradation; L-threonine degradation via oxydo-reductase pathway; glycine from L-threonine: step 1/2. Its function is as follows. Catalyzes the NAD(+)-dependent oxidation of L-threonine to 2-amino-3-ketobutyrate. This Shewanella baltica (strain OS223) protein is L-threonine 3-dehydrogenase.